Consider the following 240-residue polypeptide: Probable transcriptional regulatory protein HPAG1_0159 (240 aa).

This sequence belongs to the TACO1 family.

Its subcellular location is the cytoplasm. This chain is Probable transcriptional regulatory protein HPAG1_0159, found in Helicobacter pylori (strain HPAG1).